The chain runs to 479 residues: Tegument protein VP16 homolog (479 aa).

This sequence belongs to the herpesviridae tegument protein VP16 protein family. In terms of assembly, associates with the VP16-induced complex; binding to host HCFC1 activates VP16 for association with the octamer motif-binding host protein POU2F1, to form a multiprotein-DNA complex responsible for activating transcription of the viral immediate early genes.

The protein localises to the virion tegument. It is found in the host nucleus. Transcriptional activator of immediate-early (IE) gene products (alpha genes). Acts as a key activator of lytic infection by initiating the lytic program through the assembly of the transcriptional regulatory VP16-induced complex composed of VP16 and two cellular factors, HCFC1 and POU2F1. VP16-induced complex represents a regulatory switch: when it is on, it promotes IE-gene expression and thus lytic infection, and when it is off, it limits IE-gene transcription favoring latent infection. Functionally, may play a role in the aggregation of tegument proteins around nucleocapsids during virus morphogenesis. The polypeptide is Tegument protein VP16 homolog (Equus caballus (Horse)).